The following is a 202-amino-acid chain: GTP cyclohydrolase-2 (202 aa).

49–53 (RIHSE) is a GTP binding site. Zn(2+)-binding residues include cysteine 54, cysteine 65, and cysteine 67. GTP-binding positions include glutamine 70, 92-94 (EGR), and threonine 114. Aspartate 126 (proton acceptor) is an active-site residue. Catalysis depends on arginine 128, which acts as the Nucleophile. Threonine 149 and lysine 154 together coordinate GTP.

This sequence belongs to the GTP cyclohydrolase II family. Zn(2+) is required as a cofactor.

The catalysed reaction is GTP + 4 H2O = 2,5-diamino-6-hydroxy-4-(5-phosphoribosylamino)-pyrimidine + formate + 2 phosphate + 3 H(+). Its pathway is cofactor biosynthesis; riboflavin biosynthesis; 5-amino-6-(D-ribitylamino)uracil from GTP: step 1/4. Its function is as follows. Catalyzes the conversion of GTP to 2,5-diamino-6-ribosylamino-4(3H)-pyrimidinone 5'-phosphate (DARP), formate and pyrophosphate. The chain is GTP cyclohydrolase-2 from Shewanella frigidimarina (strain NCIMB 400).